A 1537-amino-acid chain; its full sequence is DNA excision repair protein ERCC-6-like 2 (1537 aa).

The Helicase ATP-binding domain maps to 134 to 319 (YRHYIEGRGC…WCVMDWAVPG (186 aa)). 147-154 (DDMGLGKT) serves as a coordination point for ATP. The short motif at 270 to 273 (DEAH) is the DEAH box element. A Helicase C-terminal domain is found at 510–660 (VLQQLLNHFR…CVVVGSENAK (151 aa)). Disordered regions lie at residues 715–735 (KGEP…QEPT) and 749–768 (SVGH…TSRT). Residues 755–764 (GKTDKHKFSD) show a composition bias toward basic and acidic residues. The Atypical PIP-box signature appears at 772–783 (PAQLTLLQCGFS). Disordered regions lie at residues 791–811 (KSDQ…DEQP), 833–891 (SEHQ…EDSD), and 918–948 (EDSE…PNLL). The span at 834 to 857 (EHQKSDNIQTPDEKCVSDKSEKTL) shows a compositional bias: basic and acidic residues. Ser-968 and Ser-971 each carry phosphoserine. The disordered stretch occupies residues 1274 to 1306 (VHKKEERVRNKSKEKESLLKENPSNDSTLSCYD). Positions 1276-1292 (KKEERVRNKSKEKESLL) are enriched in basic and acidic residues. Residues 1295–1306 (NPSNDSTLSCYD) are compositionally biased toward polar residues.

Belongs to the SNF2/RAD54 helicase family. Interacts with NEK6. Interacts (via an atypical PIP-box) with PCNA; this interaction facilitates cenrtomeric localization of ERCC6L2. Interacts with CYREN; this interaction is DNA independent. Interacts with XRCC6 and XRCC5. Phosphorylated by NEK6.

It is found in the nucleus. The protein resides in the cytoplasm. Its subcellular location is the cytoskeleton. The protein localises to the microtubule organizing center. It localises to the centrosome. It is found in the mitochondrion. The protein resides in the chromosome. Its subcellular location is the centromere. Its function is as follows. Promotes double-strand break (DSB) end-joining and facilitates programmed recombination by controlling how DNA ends are joined in a spatially oriented manner during repair. Also plays a role in DNA repair by restricting DNA end resection in double strand break (DSB) repair. Facilitates replication of complex DNA regions and regulates the maintenance of chromatin structure. In Mus musculus (Mouse), this protein is DNA excision repair protein ERCC-6-like 2.